The following is a 490-amino-acid chain: Chromosomal replication initiator protein DnaA (490 aa).

A domain I, interacts with DnaA modulators region spans residues 1–75 (MAVSSDAEQK…SELWKQEDAD (75 aa)). The segment at 75 to 145 (DLLKIEIVVR…SEFRHNVLGS (71 aa)) is domain II. Residues 146-368 (PLDPRYTFGS…GAFNQLLFRQ (223 aa)) form a domain III, AAA+ region region. ATP contacts are provided by Gly-192, Gly-194, Lys-195, and Thr-196. The tract at residues 369–490 (SFEPQITIDR…LLRRLINDQA (122 aa)) is domain IV, binds dsDNA.

The protein belongs to the DnaA family. As to quaternary structure, oligomerizes as a right-handed, spiral filament on DNA at oriC.

It is found in the cytoplasm. Its function is as follows. Plays an essential role in the initiation and regulation of chromosomal replication. ATP-DnaA binds to the origin of replication (oriC) to initiate formation of the DNA replication initiation complex once per cell cycle. Binds the DnaA box (a 9 base pair repeat at the origin) and separates the double-stranded (ds)DNA. Forms a right-handed helical filament on oriC DNA; dsDNA binds to the exterior of the filament while single-stranded (ss)DNA is stabiized in the filament's interior. The ATP-DnaA-oriC complex binds and stabilizes one strand of the AT-rich DNA unwinding element (DUE), permitting loading of DNA polymerase. After initiation quickly degrades to an ADP-DnaA complex that is not apt for DNA replication. Binds acidic phospholipids. In Mesorhizobium japonicum (strain LMG 29417 / CECT 9101 / MAFF 303099) (Mesorhizobium loti (strain MAFF 303099)), this protein is Chromosomal replication initiator protein DnaA.